The chain runs to 214 residues: Probable transaldolase (214 aa).

K83 acts as the Schiff-base intermediate with substrate in catalysis.

The protein belongs to the transaldolase family. Type 3B subfamily.

It is found in the cytoplasm. It catalyses the reaction D-sedoheptulose 7-phosphate + D-glyceraldehyde 3-phosphate = D-erythrose 4-phosphate + beta-D-fructose 6-phosphate. The protein operates within carbohydrate degradation; pentose phosphate pathway; D-glyceraldehyde 3-phosphate and beta-D-fructose 6-phosphate from D-ribose 5-phosphate and D-xylulose 5-phosphate (non-oxidative stage): step 2/3. Transaldolase is important for the balance of metabolites in the pentose-phosphate pathway. This is Probable transaldolase from Desulfatibacillum aliphaticivorans.